A 311-amino-acid chain; its full sequence is Pyrimidine-specific ribonucleoside hydrolase RihA (311 aa).

The active site involves His240.

The protein belongs to the IUNH family. RihA subfamily.

Hydrolyzes cytidine or uridine to ribose and cytosine or uracil, respectively. This is Pyrimidine-specific ribonucleoside hydrolase RihA from Salmonella newport (strain SL254).